Here is a 684-residue protein sequence, read N- to C-terminus: Phenoloxidase 2 (684 aa).

A propeptide spanning residues 1–50 (MADKKNLLLLFDHPTEPVFMDKGKRVTVFDVPDSFLTDRYRPISNEVQSR) is cleaved from the precursor. Positions 208, 212, and 238 each coordinate Cu cation. E350 (proton acceptor) is an active-site residue. Residues H365, H369, and H405 each contribute to the Cu cation site. Residues N448 and N492 are each glycosylated (N-linked (GlcNAc...) asparagine). Intrachain disulfides connect C581–C623 and C583–C630. N665 and N677 each carry an N-linked (GlcNAc...) asparagine glycan.

This sequence belongs to the tyrosinase family. Cu(2+) is required as a cofactor. In terms of processing, upon activation, a trypsin type protease cleaves prophenol oxidase to yield the active enzyme.

The protein localises to the secreted. The catalysed reaction is 2 L-dopa + O2 = 2 L-dopaquinone + 2 H2O. It catalyses the reaction L-tyrosine + O2 = L-dopaquinone + H2O. Its function is as follows. This is a copper-containing oxidase that functions in the formation of pigments such as melanins and other polyphenolic compounds. Catalyzes the rate-limiting conversions of tyrosine to DOPA, DOPA to DOPA-quinone and possibly 5,6 dihydroxyindole to indole-5'6 quinonee. The polypeptide is Phenoloxidase 2 (PPO2) (Drosophila melanogaster (Fruit fly)).